The following is an 830-amino-acid chain: Protein translocase subunit SecA (830 aa).

Residues Q86, 104-108 (GEGKT), and D491 each bind ATP. Residues C813, C815, C824, and C825 each coordinate Zn(2+).

Belongs to the SecA family. As to quaternary structure, monomer and homodimer. Part of the essential Sec protein translocation apparatus which comprises SecA, SecYEG and auxiliary proteins SecDF. Other proteins may also be involved. Zn(2+) is required as a cofactor.

The protein resides in the cell membrane. The protein localises to the cytoplasm. The catalysed reaction is ATP + H2O + cellular proteinSide 1 = ADP + phosphate + cellular proteinSide 2.. In terms of biological role, part of the Sec protein translocase complex. Interacts with the SecYEG preprotein conducting channel. Has a central role in coupling the hydrolysis of ATP to the transfer of proteins into and across the cell membrane, serving as an ATP-driven molecular motor driving the stepwise translocation of polypeptide chains across the membrane. This chain is Protein translocase subunit SecA, found in Syntrophomonas wolfei subsp. wolfei (strain DSM 2245B / Goettingen).